The primary structure comprises 156 residues: Small ribosomal subunit protein bS16 (156 aa).

A compositionally biased stretch (low complexity) spans 124 to 135 (AAKAAEAETPAE). Residues 124-156 (AAKAAEAETPAEVQHDDEKVELADVEESAPESV) are disordered. Residues 136 to 145 (VQHDDEKVEL) are compositionally biased toward basic and acidic residues. A compositionally biased stretch (acidic residues) spans 146–156 (ADVEESAPESV).

This sequence belongs to the bacterial ribosomal protein bS16 family.

This Bifidobacterium animalis subsp. lactis (strain AD011) protein is Small ribosomal subunit protein bS16.